The sequence spans 436 residues: Methylenetetrahydrofolate--tRNA-(uracil-5-)-methyltransferase TrmFO (436 aa).

Position 8–13 (8–13) interacts with FAD; it reads GGGLAG.

It belongs to the MnmG family. TrmFO subfamily. FAD is required as a cofactor.

The protein resides in the cytoplasm. It catalyses the reaction uridine(54) in tRNA + (6R)-5,10-methylene-5,6,7,8-tetrahydrofolate + NADH + H(+) = 5-methyluridine(54) in tRNA + (6S)-5,6,7,8-tetrahydrofolate + NAD(+). The enzyme catalyses uridine(54) in tRNA + (6R)-5,10-methylene-5,6,7,8-tetrahydrofolate + NADPH + H(+) = 5-methyluridine(54) in tRNA + (6S)-5,6,7,8-tetrahydrofolate + NADP(+). Functionally, catalyzes the folate-dependent formation of 5-methyl-uridine at position 54 (M-5-U54) in all tRNAs. The sequence is that of Methylenetetrahydrofolate--tRNA-(uracil-5-)-methyltransferase TrmFO from Syntrophomonas wolfei subsp. wolfei (strain DSM 2245B / Goettingen).